Reading from the N-terminus, the 251-residue chain is Small ribosomal subunit protein uS3 (251 aa).

One can recognise a KH type-2 domain in the interval 22–93; the sequence is LNEFFTRELA…GIAIYAERVE (72 aa). Positions 223–251 are disordered; the sequence is TVKSYKQTAEDETETDAPVEAEAEVEATA. The segment covering 232-251 has biased composition (acidic residues); sequence EDETETDAPVEAEAEVEATA.

This sequence belongs to the universal ribosomal protein uS3 family. In terms of assembly, component of the small ribosomal subunit. Mature ribosomes consist of a small (40S) and a large (60S) subunit. The 40S subunit contains about 32 different proteins and 1 molecule of RNA (18S). The 60S subunit contains 45 different proteins and 3 molecules of RNA (25S, 5.8S and 5S).

It is found in the cytoplasm. Its function is as follows. Component of the ribosome, a large ribonucleoprotein complex responsible for the synthesis of proteins in the cell. The small ribosomal subunit (SSU) binds messenger RNAs (mRNAs) and translates the encoded message by selecting cognate aminoacyl-transfer RNA (tRNA) molecules. The large subunit (LSU) contains the ribosomal catalytic site termed the peptidyl transferase center (PTC), which catalyzes the formation of peptide bonds, thereby polymerizing the amino acids delivered by tRNAs into a polypeptide chain. The nascent polypeptides leave the ribosome through a tunnel in the LSU and interact with protein factors that function in enzymatic processing, targeting, and the membrane insertion of nascent chains at the exit of the ribosomal tunnel. The chain is Small ribosomal subunit protein uS3 (RPS3) from Candida albicans (strain SC5314 / ATCC MYA-2876) (Yeast).